Reading from the N-terminus, the 242-residue chain is Biosynthetic peptidoglycan transglycosylase (242 aa).

The chain crosses the membrane as a helical span at residues 15-35; the sequence is FLLLLMVVLAVFWGGGIALFS.

This sequence belongs to the glycosyltransferase 51 family.

It localises to the cell inner membrane. It catalyses the reaction [GlcNAc-(1-&gt;4)-Mur2Ac(oyl-L-Ala-gamma-D-Glu-L-Lys-D-Ala-D-Ala)](n)-di-trans,octa-cis-undecaprenyl diphosphate + beta-D-GlcNAc-(1-&gt;4)-Mur2Ac(oyl-L-Ala-gamma-D-Glu-L-Lys-D-Ala-D-Ala)-di-trans,octa-cis-undecaprenyl diphosphate = [GlcNAc-(1-&gt;4)-Mur2Ac(oyl-L-Ala-gamma-D-Glu-L-Lys-D-Ala-D-Ala)](n+1)-di-trans,octa-cis-undecaprenyl diphosphate + di-trans,octa-cis-undecaprenyl diphosphate + H(+). It functions in the pathway cell wall biogenesis; peptidoglycan biosynthesis. Peptidoglycan polymerase that catalyzes glycan chain elongation from lipid-linked precursors. In Shigella sonnei (strain Ss046), this protein is Biosynthetic peptidoglycan transglycosylase.